Reading from the N-terminus, the 431-residue chain is MSLMTKLGFRALVASCLITAGSAANAQVNVLITGVGSTQFPIATANFTNEANLPQQVTSIVRADLARSGKFTNIDAGSTPVPETASVDLGAWKAKGANAFVAGSVNRDANGQYKVNFILYDTVKQQSLGGLSLTATDTTLRTAGHKIADYIYQKLLGVRGVFATRLSYVIKTGNRYQLQISDSDGQNARIALSSTEPIISPAWSPSGTKVAYVSFERKKPIVYIHDLPTGRRYMVSDQKGNNSAPAWSPDSNTLAVALSLTGNTQIYTVNANGGGLRRLTQSSSIDTEPFYSPDGRWIYFTSDRGGAPQIYRMPAQGESAGAAQRVTFTGSYNTSPRVSPDGKLLAYISRTGGGFKLYVQDLQTGAANAITNTNRDESPSFAANGQYVLYATQSGGRNVLAAVPSDGSAPPQILSVQGGSVREPSWGPFMQ.

A signal peptide spans 1-26; it reads MSLMTKLGFRALVASCLITAGSAANA. Residues 406–431 are disordered; the sequence is DGSAPPQILSVQGGSVREPSWGPFMQ.

It belongs to the TolB family. The Tol-Pal system is composed of five core proteins: the inner membrane proteins TolA, TolQ and TolR, the periplasmic protein TolB and the outer membrane protein Pal. They form a network linking the inner and outer membranes and the peptidoglycan layer.

Its subcellular location is the periplasm. Functionally, part of the Tol-Pal system, which plays a role in outer membrane invagination during cell division and is important for maintaining outer membrane integrity. The polypeptide is Tol-Pal system protein TolB (Burkholderia cenocepacia (strain HI2424)).